The primary structure comprises 575 residues: Acyloxyacyl hydrolase (575 aa).

Positions methionine 1–alanine 23 are cleaved as a signal peptide. Positions serine 24–serine 34 are excised as a propeptide. One can recognise a Saposin B-type domain in the interval asparagine 37–threonine 118. Residues glycine 38 to cysteine 70 are important for enzyme activity, localization to cytoplasmic vesicles, and protein stability. Cystine bridges form between cysteine 41–cysteine 114, cysteine 44–cysteine 108, cysteine 70–cysteine 83, cysteine 123–cysteine 453, cysteine 160–cysteine 169, cysteine 206–cysteine 230, cysteine 249–cysteine 329, and cysteine 376–cysteine 459. An N-linked (GlcNAc...) asparagine glycan is attached at asparagine 59. Residues lysine 173 to glutamate 177 are lipopolysaccharide binding. Aspartate 184, aspartate 186, aspartate 188, tyrosine 190, aspartate 205, asparagine 207, aspartate 208, aspartate 210, valine 213, aspartate 223, aspartate 227, asparagine 229, asparagine 231, isoleucine 233, and glutamate 245 together coordinate Ca(2+). N-linked (GlcNAc...) asparagine glycosylation occurs at asparagine 207. Serine 263 is an active-site residue. Asparagine 409 and asparagine 466 each carry an N-linked (GlcNAc...) asparagine glycan.

As to quaternary structure, heterodimer of the large and small subunits; disulfide-linked. Ca(2+) serves as cofactor. Post-translationally, cleaved into a large and a small subunit. In terms of processing, the small subunit is N-glycosylated.

It is found in the secreted. It localises to the cytoplasmic vesicle. The enzyme catalyses a 3-(acyloxy)acyl derivative of bacterial toxin + H2O = a 3-hydroxyacyl derivative of bacterial toxin + a fatty acid + H(+). With respect to regulation, inhibited by EDTA. Functionally, removes the secondary (acyloxyacyl-linked) fatty acyl chains from the lipid A region of bacterial lipopolysaccharides. By breaking down LPS, terminates the host response to bacterial infection and prevents prolonged and damaging inflammatory responses. In peritoneal macrophages, seems to be important for recovery from a state of immune tolerance following infection by Gram-negative bacteria. In Homo sapiens (Human), this protein is Acyloxyacyl hydrolase.